A 342-amino-acid chain; its full sequence is S-adenosylmethionine:tRNA ribosyltransferase-isomerase (342 aa).

It belongs to the QueA family. As to quaternary structure, monomer.

The protein resides in the cytoplasm. It catalyses the reaction 7-aminomethyl-7-carbaguanosine(34) in tRNA + S-adenosyl-L-methionine = epoxyqueuosine(34) in tRNA + adenine + L-methionine + 2 H(+). Its pathway is tRNA modification; tRNA-queuosine biosynthesis. Functionally, transfers and isomerizes the ribose moiety from AdoMet to the 7-aminomethyl group of 7-deazaguanine (preQ1-tRNA) to give epoxyqueuosine (oQ-tRNA). This Zymomonas mobilis subsp. mobilis (strain ATCC 31821 / ZM4 / CP4) protein is S-adenosylmethionine:tRNA ribosyltransferase-isomerase.